The chain runs to 182 residues: Ribosome-recycling factor (182 aa).

The protein belongs to the RRF family.

The protein resides in the cytoplasm. In terms of biological role, responsible for the release of ribosomes from messenger RNA at the termination of protein biosynthesis. May increase the efficiency of translation by recycling ribosomes from one round of translation to another. This is Ribosome-recycling factor from Synechococcus sp. (strain JA-2-3B'a(2-13)) (Cyanobacteria bacterium Yellowstone B-Prime).